The sequence spans 487 residues: Glutamate mutase epsilon subunit (487 aa).

An L-glutamate-binding site is contributed by Arg-62. Gly-64 contacts adenosylcob(III)alamin. Arg-96 serves as a coordination point for L-glutamate. Asn-119 serves as a coordination point for adenosylcob(III)alamin. L-glutamate is bound by residues 145–146 (RH), Glu-167, and Tyr-173. Position 176 (Pro-176) interacts with adenosylcob(III)alamin. Residue Tyr-177 coordinates L-glutamate. Adenosylcob(III)alamin is bound by residues Phe-289, Lys-318, and Glu-322. The segment at 465 to 487 (SDGKLIGRPGGDNSPAGGASDAD) is disordered.

It belongs to the methylaspartate mutase GlmE subunit family. Heterotetramer composed of 2 epsilon subunits (GlmE) and 2 sigma subunits (GlmS). GlmE exists as a homodimer and GlmS as a monomer. Adenosylcob(III)alamin is required as a cofactor.

It catalyses the reaction (2S,3S)-3-methyl-L-aspartate = L-glutamate. Its pathway is amino-acid degradation; L-glutamate degradation via mesaconate pathway; acetate and pyruvate from L-glutamate: step 1/4. Its function is as follows. Catalyzes the carbon skeleton rearrangement of L-glutamate to L-threo-3-methylaspartate ((2S,3S)-3-methylaspartate). This Haloarcula marismortui (strain ATCC 43049 / DSM 3752 / JCM 8966 / VKM B-1809) (Halobacterium marismortui) protein is Glutamate mutase epsilon subunit.